The primary structure comprises 131 residues: Large ribosomal subunit protein mL60 (131 aa).

Residues 1-12 (MFGPFKLTSPVA) constitute a mitochondrion transit peptide.

Belongs to the mitochondrion-specific ribosomal protein mL60 family. Component of the mitochondrial large ribosomal subunit (mt-LSU). Mature yeast 74S mitochondrial ribosomes consist of a small (37S) and a large (54S) subunit. The 37S small subunit contains a 15S ribosomal RNA (15S mt-rRNA) and 34 different proteins. The 54S large subunit contains a 21S rRNA (21S mt-rRNA) and 46 different proteins.

The protein resides in the mitochondrion. Its function is as follows. Component of the mitochondrial ribosome (mitoribosome), a dedicated translation machinery responsible for the synthesis of mitochondrial genome-encoded proteins, including at least some of the essential transmembrane subunits of the mitochondrial respiratory chain. The mitoribosomes are attached to the mitochondrial inner membrane and translation products are cotranslationally integrated into the membrane. The chain is Large ribosomal subunit protein mL60 (MRPL31) from Saccharomyces cerevisiae (strain ATCC 204508 / S288c) (Baker's yeast).